We begin with the raw amino-acid sequence, 382 residues long: Dual-specificity RNA methyltransferase RlmN (382 aa).

The active-site Proton acceptor is the Glu-96. The region spanning 102-342 is the Radical SAM core domain; the sequence is QGKRGTLCVS…VRTTRGEDID (241 aa). Cys-109 and Cys-345 are disulfide-bonded. Residues Cys-116, Cys-120, and Cys-123 each coordinate [4Fe-4S] cluster. S-adenosyl-L-methionine is bound by residues 170–171, Ser-202, 224–226, and Asn-302; these read GE and SLH. Residue Cys-345 is the S-methylcysteine intermediate of the active site.

It belongs to the radical SAM superfamily. RlmN family. Requires [4Fe-4S] cluster as cofactor.

The protein resides in the cytoplasm. The enzyme catalyses adenosine(2503) in 23S rRNA + 2 reduced [2Fe-2S]-[ferredoxin] + 2 S-adenosyl-L-methionine = 2-methyladenosine(2503) in 23S rRNA + 5'-deoxyadenosine + L-methionine + 2 oxidized [2Fe-2S]-[ferredoxin] + S-adenosyl-L-homocysteine. The catalysed reaction is adenosine(37) in tRNA + 2 reduced [2Fe-2S]-[ferredoxin] + 2 S-adenosyl-L-methionine = 2-methyladenosine(37) in tRNA + 5'-deoxyadenosine + L-methionine + 2 oxidized [2Fe-2S]-[ferredoxin] + S-adenosyl-L-homocysteine. Specifically methylates position 2 of adenine 2503 in 23S rRNA and position 2 of adenine 37 in tRNAs. m2A2503 modification seems to play a crucial role in the proofreading step occurring at the peptidyl transferase center and thus would serve to optimize ribosomal fidelity. The sequence is that of Dual-specificity RNA methyltransferase RlmN from Pseudomonas savastanoi pv. phaseolicola (strain 1448A / Race 6) (Pseudomonas syringae pv. phaseolicola (strain 1448A / Race 6)).